The sequence spans 129 residues: C-phycocyanin beta subunit (129 aa).

N62 is modified (N4-methylasparagine). C116 serves as a coordination point for (2R,3E)-phycocyanobilin.

Belongs to the phycobiliprotein family. As to quaternary structure, heterodimer of an alpha and a beta subunit, which further assembles into trimers and the trimers into hexamers. Two isomers exist. Post-translationally, contains two covalently linked bilin chromophores.

The protein resides in the cellular thylakoid membrane. Functionally, light-harvesting photosynthetic bile pigment-protein from the phycobiliprotein complex (phycobilisome, PBS). Phycocyanin is the major phycobiliprotein in the PBS rod. The protein is C-phycocyanin beta subunit of Aphanizomenon flos-aquae.